The primary structure comprises 590 residues: Cyclin-dependent kinase-like 3 (590 aa).

The Protein kinase domain occupies 4–286; that stretch reads YETLGKVGEG…SSDLLHHEYF (283 aa). ATP contacts are provided by residues 10–18 and Lys-33; that span reads VGEGSYGTV. Positions 45 to 51 match the [NKR]KIAxRE motif; sequence KIAMREI. Asp-125 (proton acceptor) is an active-site residue. Thr-158 is subject to Phosphothreonine. Tyr-160 carries the phosphotyrosine modification. Disordered regions lie at residues 459-508 and 547-590; these read RAKK…SNEN and LKRE…PDVE. Positions 466 to 477 are enriched in polar residues; that stretch reads SSQSIGQVMPNS. Composition is skewed to basic and acidic residues over residues 547–556 and 580–590; these read LKRESKKTDS and TERKKNLPDVE.

Belongs to the protein kinase superfamily. CMGC Ser/Thr protein kinase family. CDC2/CDKX subfamily.

Its subcellular location is the cytoplasm. The catalysed reaction is L-seryl-[protein] + ATP = O-phospho-L-seryl-[protein] + ADP + H(+). It carries out the reaction L-threonyl-[protein] + ATP = O-phospho-L-threonyl-[protein] + ADP + H(+). The chain is Cyclin-dependent kinase-like 3 from Macaca fascicularis (Crab-eating macaque).